We begin with the raw amino-acid sequence, 2214 residues long: Multifunctional protein URA2 (2214 aa).

Ala-2 carries the N-acetylalanine modification. The GATase (Glutamine amidotransferase) stretch occupies residues 2 to 400 (ATIAPTAPIT…PGPRDTEFLF (399 aa)). L-glutamine contacts are provided by Ser-64, Gly-273, and Gly-275. The 186-residue stretch at 228 to 413 (RILAIDVGMK…IQAVKEFKYT (186 aa)) folds into the Glutamine amidotransferase type-1 domain. Cys-302 (nucleophile; for GATase activity) is an active-site residue. Positions 303, 306, 344, 346, and 347 each coordinate L-glutamine. Residues His-386 and Glu-388 each act as for GATase activity in the active site. Residues 401–440 (DVFIQAVKEFKYTQVLKPIAFPGGLLEDNVKAHPRIEAKK) form a linker region. Residues 440–980 (KVLVLGSGGL…DSHDLSFDDH (541 aa)) form a CPSase A region. The tract at residues 440–1482 (KVLVLGSGGL…TNVKCAKLLI (1043 aa)) is CPSase (Carbamoyl phosphate synthase). Positions 558, 598, 604, 605, 635, 637, 642, 668, 669, 670, 711, and 725 each coordinate ATP. 2 ATP-grasp domains span residues 562–754 (SNAI…KLGL) and 1099–1290 (SRML…KAIM). Mg(2+) contacts are provided by Gln-711, Glu-725, and Asn-727. 3 residues coordinate Mn(2+): Gln-711, Glu-725, and Asn-727. A CPSase B region spans residues 981-1482 (GVMVLGSGVY…TNVKCAKLLI (502 aa)). The ATP site is built by Arg-1135, Lys-1174, Ile-1176, Glu-1181, Gly-1206, Val-1207, His-1208, Ser-1209, Gln-1249, and Glu-1261. Mg(2+) is bound by residues Gln-1249, Glu-1261, and Asn-1263. Mn(2+)-binding residues include Gln-1249, Glu-1261, and Asn-1263. An MGS-like domain is found at 1356 to 1508 (FKLPKKNILL…QTSHRTITLP (153 aa)). The linker stretch occupies residues 1483–1492 (EAISRNITLD). The segment at 1493-1821 (VSERDAQTSH…YNGETLVLSG (329 aa)) is defective DHOase domain. Residues 1822-1909 (ELVSPGAKGK…NLIRSNNPFR (88 aa)) are linker. Lys-1853 is covalently cross-linked (Glycyl lysine isopeptide (Lys-Gly) (interchain with G-Cter in ubiquitin)). Ser-1857 carries the phosphoserine; by PKA modification. The ATCase (Aspartate transcarbamylase) stretch occupies residues 1910-2214 (GRHILSIKQF…LLAMVMGVDM (305 aa)). 2 residues coordinate carbamoyl phosphate: Arg-1962 and Thr-1963. Position 1990 (Lys-1990) interacts with L-aspartate. The carbamoyl phosphate site is built by Arg-2011, His-2039, and Gln-2042. Residues Arg-2072 and Arg-2134 each coordinate L-aspartate. 2 residues coordinate carbamoyl phosphate: Leu-2173 and Pro-2174.

It in the N-terminal section; belongs to the CarA family. This sequence in the 2nd section; belongs to the CarB family. In the 3rd section; belongs to the metallo-dependent hydrolases superfamily. DHOase family. CAD subfamily. The protein in the C-terminal section; belongs to the aspartate/ornithine carbamoyltransferase superfamily. ATCase family. Mg(2+) serves as cofactor. It depends on Mn(2+) as a cofactor.

The protein localises to the cytoplasm. The catalysed reaction is hydrogencarbonate + L-glutamine + 2 ATP + H2O = carbamoyl phosphate + L-glutamate + 2 ADP + phosphate + 2 H(+). It carries out the reaction L-glutamine + H2O = L-glutamate + NH4(+). The enzyme catalyses hydrogencarbonate + NH4(+) + 2 ATP = carbamoyl phosphate + 2 ADP + phosphate + 2 H(+). It catalyses the reaction carbamoyl phosphate + L-aspartate = N-carbamoyl-L-aspartate + phosphate + H(+). Its pathway is pyrimidine metabolism; UMP biosynthesis via de novo pathway; (S)-dihydroorotate from bicarbonate: step 1/3. It participates in pyrimidine metabolism; UMP biosynthesis via de novo pathway; (S)-dihydroorotate from bicarbonate: step 2/3. With respect to regulation, both CPSase and ATCase activities are feedback inhibited by the end product UTP. Multifunctional protein that encodes the first 2 enzymatic activities of the de novo pyrimidine pathway: carbamoylphosphate synthetase (CPSase; EC 6.3.5.5) and aspartate transcarbamylase (ATCase; EC 2.1.3.2). The CPSase-function is accomplished in 2 steps, by a glutamine-dependent amidotransferase activity (GATase) that binds and cleaves glutamine to produce ammonia, followed by an ammonium-dependent carbamoyl phosphate synthetase, which reacts with the ammonia, hydrogencarbonate and ATP to form carbamoyl phosphate. The endogenously produced carbamoyl phosphate is sequestered and channeled to the ATCase active site. ATCase then catalyzes the formation of carbamoyl-L-aspartate from L-aspartate and carbamoyl phosphate. The chain is Multifunctional protein URA2 (URA2) from Saccharomyces cerevisiae (strain ATCC 204508 / S288c) (Baker's yeast).